A 756-amino-acid chain; its full sequence is Phosphate transporter PHO1 homolog 6 (756 aa).

The SPX domain occupies methionine 1 to lysine 303. Residues methionine 1–threonine 355 are Cytoplasmic-facing. The chain crosses the membrane as a helical span at residues phenylalanine 356–valine 376. At arginine 377 to proline 396 the chain is on the extracellular side. A helical transmembrane segment spans residues leucine 397–phenylalanine 417. The Cytoplasmic segment spans residues tryptophan 418–lysine 440. Residues glutamine 441–leucine 461 traverse the membrane as a helical segment. Residues aspartate 462–glutamate 477 lie on the Extracellular side of the membrane. The helical transmembrane segment at leucine 478–phenylalanine 498 threads the bilayer. Over tyrosine 499 to arginine 631 the chain is Cytoplasmic. The 195-residue stretch at lysine 562 to histidine 756 folds into the EXS domain. A helical membrane pass occupies residues leucine 632–tyrosine 652. The Extracellular segment spans residues aspartate 653–glutamate 676. The chain crosses the membrane as a helical span at residues valine 677–leucine 697. The Cytoplasmic portion of the chain corresponds to aspartate 698–histidine 756.

The protein belongs to the SYG1 (TC 2.A.94) family. In terms of tissue distribution, specifically expressed in anther connective tissue.

Its subcellular location is the cell membrane. In terms of biological role, may transport inorganic phosphate (Pi). This is Phosphate transporter PHO1 homolog 6 (PHO1-H6) from Arabidopsis thaliana (Mouse-ear cress).